A 760-amino-acid polypeptide reads, in one-letter code: General transcription and DNA repair factor IIH helicase subunit XPD (760 aa).

In terms of domain architecture, Helicase ATP-binding spans 7 to 283 (GLLVYFPYDY…KETDEQRLRE (277 aa)). Residue 42–49 (MPSGTGKT) participates in ATP binding. [4Fe-4S] cluster-binding residues include Cys-116, Cys-134, Cys-155, and Cys-190. Positions 234–237 (DEAH) match the DEAH box motif. The mediates interaction with MMS19 stretch occupies residues 438 to 637 (MDASLAIKPV…TQSRILKARL (200 aa)). A Nuclear localization signal motif is present at residues 682-695 (KRFARADKRGKLPR).

This sequence belongs to the helicase family. RAD3/XPD subfamily. In terms of assembly, component of the 7-subunit TFIIH core complex composed of XPB/ERCC3, XPD/ERCC2, GTF2H1, GTF2H2, GTF2H3, GTF2H4 and GTF2H5, which is active in NER. The core complex associates with the 3-subunit CDK-activating kinase (CAK) module composed of CCNH/cyclin H, CDK7 and MNAT1 to form the 10-subunit holoenzyme (holo-TFIIH) active in transcription. The interaction with GTF2H2 results in the stimulation of the 5'--&gt;3' helicase activity. Component of the MMXD complex, which includes CIAO1, ERCC2, CIAO2B, MMS19 and SLC25A5. Interacts with CIAO1 and CIAO2B; the interaction WITH CIAO2B is direct. Interacts with ATF7IP. Interacts directly with MMS19. Part of TBP-based Pol II pre-initiation complex (PIC), in which Pol II core assembles with general transcription factors and other specific initiation factors including GTF2E1, GTF2E2, GTF2F1, GTF2F2, TCEA1, ERCC2, ERCC3, GTF2H2, GTF2H3, GTF2H4, GTF2H5, GTF2A1, GTF2A2, GTF2B and TBP; this large multi-subunit PIC complex mediates DNA unwinding and targets Pol II core to the transcription start site where the first phosphodiester bond forms. Mg(2+) is required as a cofactor. The cofactor is [4Fe-4S] cluster. Post-translationally, ISGylated.

It is found in the nucleus. The protein localises to the cytoplasm. The protein resides in the cytoskeleton. It localises to the spindle. The catalysed reaction is Couples ATP hydrolysis with the unwinding of duplex DNA at the replication fork by translocating in the 5'-3' direction. This creates two antiparallel DNA single strands (ssDNA). The leading ssDNA polymer is the template for DNA polymerase III holoenzyme which synthesizes a continuous strand.. It carries out the reaction ATP + H2O = ADP + phosphate + H(+). Functionally, ATP-dependent 5'-3' DNA helicase, component of the general transcription and DNA repair factor IIH (TFIIH) core complex, which is involved in general and transcription-coupled nucleotide excision repair (NER) of damaged DNA and, when complexed to CDK-activating kinase (CAK), involved in transcription by RNA polymerase II. In NER, TFIIH acts by opening DNA around the lesion to allow the excision of the damaged oligonucleotide and its replacement by a new DNA fragment. The ATP-dependent helicase activity of XPD/ERCC2 is required for DNA opening. In transcription, TFIIH has an essential role in transcription initiation. When the pre-initiation complex (PIC) has been established, TFIIH is required for promoter opening and promoter escape. Phosphorylation of the C-terminal tail (CTD) of the largest subunit of RNA polymerase II by the kinase module CAK controls the initiation of transcription. XPD/ERCC2 acts by forming a bridge between CAK and the core-TFIIH complex. Involved in the regulation of vitamin-D receptor activity. As part of the mitotic spindle-associated MMXD complex it plays a role in chromosome segregation. Might have a role in aging process and could play a causative role in the generation of skin cancers. In Bos taurus (Bovine), this protein is General transcription and DNA repair factor IIH helicase subunit XPD (ERCC2).